A 460-amino-acid chain; its full sequence is Elongation factor 1-alpha (460 aa).

N,N,N-trimethylglycine is present on glycine 2. Lysine 3 carries the post-translational modification N6,N6-dimethyllysine; alternate. Position 3 is an N6-methyllysine; alternate (lysine 3). Positions 6-241 (KTHINVVVIG…DSIEPPKRPT (236 aa)) constitute a tr-type G domain. The segment at 15 to 22 (GHVDSGKS) is G1. 15–22 (GHVDSGKS) contacts GTP. The tract at residues 71 to 75 (GITID) is G2. Residue lysine 80 is modified to N6,N6,N6-trimethyllysine. Residues 92-95 (DAPG) form a G3 region. GTP-binding positions include 92–96 (DAPGH) and 154–157 (NKMD). Positions 154–157 (NKMD) are G4. Positions 193–195 (SGF) are G5. Lysine 317 carries the post-translational modification N6,N6-dimethyllysine; alternate. Residue lysine 317 is modified to N6-methyllysine; alternate. At lysine 391 the chain carries N6-methyllysine.

This sequence belongs to the TRAFAC class translation factor GTPase superfamily. Classic translation factor GTPase family. EF-Tu/EF-1A subfamily.

It localises to the cytoplasm. Functionally, this protein promotes the GTP-dependent binding of aminoacyl-tRNA to the A-site of ribosomes during protein biosynthesis. This is Elongation factor 1-alpha (tef1) from Hypocrea jecorina (Trichoderma reesei).